We begin with the raw amino-acid sequence, 232 residues long: NKG2-D type II integral membrane protein (232 aa).

Residues 1 to 66 (MALIRDRKSH…IEKLKISPMF (66 aa)) are Cytoplasmic-facing. A helical; Signal-anchor for type II membrane protein membrane pass occupies residues 67 to 89 (VVRVLAIALAIRFTLNTLMWLAI). The Extracellular segment spans residues 90 to 232 (FKETFQPVLC…NTYICMKRAV (143 aa)). Cystine bridges form between Cys-112–Cys-121 and Cys-115–Cys-126. Residues 122–228 (HRNNCYQFFN…CANLNTYICM (107 aa)) enclose the C-type lectin domain. N-linked (GlcNAc...) asparagine glycans are attached at residues Asn-137, Asn-147, and Asn-179. 2 cysteine pairs are disulfide-bonded: Cys-143-Cys-227 and Cys-205-Cys-219.

Homodimer; disulfide-linked. Heterohexamer composed of two subunits of KLRK1 and four subunits of HCST/DAP10. Isoform 1 (via transmembrane domain) interacts with HCST/DAP10; the interaction is required for KLRK1 cell surface expression on activated CD8(+) T-cells, but is dispensable on activated TYROBP-expressing NK cells. Isoform 2 (via transmembrane domain) interacts with HCST/DAP10 (via transmembrane domain); the interaction is required for KLRK1 NK cell surface expression and induces NK cell-mediated cytotoxicity. Isoform 2 (via transmembrane domain) interacts with TYROBP (via transmembrane domain); the interaction is required for KLRK1 NK cell surface expression and induce NK cell-mediated cytotoxicity and cytokine secretion. Isoform 1 does not interact with TYROBP. Interacts with CEACAM1; recruits PTPN6 that dephosphorylates VAV1. In terms of tissue distribution, expressed in natural killer (NK) cells, activated CD8(+) alpha-beta and gamma-delta T-cells and natural killer T (NKT) cells (at protein level). May be expressed on dendritic cell (DC). Isoform 1 is strongly expressed in natural killer (NK) cells. Isoform 2 is weakly expressed in natural killer (NK) cells. Isoform 1 and isoform 2 are expressed in stimulated, but not in unstimulated, CD8(+) T-cells and macrophages.

The protein resides in the cell membrane. Functions as an activating and costimulatory receptor involved in immunosurveillance upon binding to various cellular stress-inducible ligands displayed at the surface of autologous tumor cells and virus-infected cells. Provides both stimulatory and costimulatory innate immune responses on activated killer (NK) cells, leading to cytotoxic activity. Acts as a costimulatory receptor for T-cell receptor (TCR) in CD8(+) T-cell-mediated adaptive immune responses by amplifying T-cell activation. Stimulates perforin-mediated elimination of ligand-expressing tumor cells. Signaling involves calcium influx, culminating in the expression of TNF-alpha. Participates in NK cell-mediated bone marrow graft rejection. May play a regulatory role in differentiation and survival of NK cells. Binds to ligands belonging to various subfamilies of MHC class I-related glycoproteins including RAET1A, RAET1B, RAET1C, RAET1D, RAET1E, H60 and MULT1. This chain is NKG2-D type II integral membrane protein (Klrk1), found in Mus musculus (Mouse).